The sequence spans 305 residues: Ornithine carbamoyltransferase (305 aa).

Carbamoyl phosphate contacts are provided by residues 53–56, Q80, R104, and 131–134; these read STRT and HPCQ. L-ornithine contacts are provided by residues N162, D219, and 223–224; that span reads SM. Carbamoyl phosphate contacts are provided by residues 259–260 and R287; that span reads CL.

This sequence belongs to the aspartate/ornithine carbamoyltransferase superfamily. OTCase family.

Its subcellular location is the cytoplasm. The enzyme catalyses carbamoyl phosphate + L-ornithine = L-citrulline + phosphate + H(+). It functions in the pathway amino-acid biosynthesis; L-arginine biosynthesis; L-arginine from L-ornithine and carbamoyl phosphate: step 1/3. Its function is as follows. Reversibly catalyzes the transfer of the carbamoyl group from carbamoyl phosphate (CP) to the N(epsilon) atom of ornithine (ORN) to produce L-citrulline. The polypeptide is Ornithine carbamoyltransferase (Psychrobacter cryohalolentis (strain ATCC BAA-1226 / DSM 17306 / VKM B-2378 / K5)).